Reading from the N-terminus, the 172-residue chain is 5'(3')-deoxyribonucleotidase (172 aa).

D8 acts as the Nucleophile in catalysis. D8, D10, and D132 together coordinate Mg(2+). The active-site Proton donor is D10.

Belongs to the 5'(3')-deoxyribonucleotidase family. Mg(2+) serves as cofactor.

Dephosphorylates nucleoside monophosphates such as the 5' and 2'(3')-phosphates of deoxyribonucleotides in vitro. Also catalyzes the dephosphorylation of coenzyme A (CoA), pyridoxal-5'-phosphate (PLP), riboflavine-5-phosphate (FMN) and nicotinamide adenine dinucleotide phosphate (NADP) in vitro. The sequence is that of 5'(3')-deoxyribonucleotidase (yorS) from Bacillus subtilis (strain 168).